Here is a 283-residue protein sequence, read N- to C-terminus: Pseudokinase OPG198 (283 aa).

ATP contacts are provided by methionine 1 and lysine 30. In terms of domain architecture, Protein kinase spans 1-283 (MESFKYCFDN…DRLRRLFIQD (283 aa)).

The protein belongs to the protein kinase superfamily. Ser/Thr protein kinase family. Poxviruses subfamily. Interacts with B1/VPK1. Interacts with host VRK1. Interacts with host VRK2.

It is found in the host nucleus. With respect to regulation, both catalytically active kinases B1/VPK1 and host VRK2 repress B12 inhibitory activity in a B1/VPK1 deletion mutant strain. Functionally, pseudokinase that plays a role in viral DNA replication repression by activating the antiviral protein BANF1 and inhibiting the activity of host VRK1, a cellular modulator of BANF1. The chain is Pseudokinase OPG198 (OPG198) from Homo sapiens (Human).